The chain runs to 563 residues: Solute carrier family 22 member 6 (563 aa).

At 1 to 9 (MAFNDLLQQ) the chain is on the cytoplasmic side. A helical transmembrane segment spans residues 10 to 30 (VGGVGRFQQIQVTLVVLPLLL). Residues 31-135 (MASHNTLQNF…LVCSHRALRQ (105 aa)) are Extracellular-facing. N-linked (GlcNAc...) asparagine glycans are attached at residues N39, N56, N92, N97, and N113. The helical transmembrane segment at 136–156 (LAQSLYMVGVLLGAMVFGYLA) threads the bilayer. The Cytoplasmic portion of the chain corresponds to 157–164 (DRLGRRKV). A helical membrane pass occupies residues 165-187 (LILNYLQTAVSGTCAAFAPNFPI). Topologically, residues 188 to 190 (YCA) are extracellular. A helical transmembrane segment spans residues 191-213 (FRLLSGMALAGISLNCMTLNVEW). Topologically, residues 214 to 224 (MPIHTRACVGT) are cytoplasmic. The chain crosses the membrane as a helical span at residues 225-245 (LIGYVYSLGQFLLAGVAYAVP). Residues 246 to 248 (HWR) are Extracellular-facing. Residues 249 to 269 (HLQLLVSAPFFAFFIYSWFFI) form a helical membrane-spanning segment. Residues 270-337 (ESARWHSSSG…ELLRCPTLRH (68 aa)) are Cytoplasmic-facing. A helical membrane pass occupies residues 338–358 (LFLCLSMLWFATSFAYYGLVM). The Extracellular portion of the chain corresponds to 359–368 (DLQGFGVSIY). A helical membrane pass occupies residues 369-389 (LIQVIFGAVDLPAKLVGFLVI). Residues 390–395 (NSLGRR) lie on the Cytoplasmic side of the membrane. A helical membrane pass occupies residues 396-416 (PAQMAALLLAGICILLNGVIP). At 417–425 (QDQSIVRTS) the chain is on the extracellular side. The helical transmembrane segment at 426–446 (LAVLGKGCLAASFNCIFLYTG) threads the bilayer. The Cytoplasmic segment spans residues 447 to 455 (ELYPTMIRQ). A helical transmembrane segment spans residues 456–475 (TGMGMGSTMARVGSIVSPLV). Topologically, residues 476–484 (SMTAELYPS) are extracellular. The chain crosses the membrane as a helical span at residues 485–505 (MPLFIYGAVPVAASAVTVLLP). Topologically, residues 506–563 (ETLGQPLPDTVQDLESRWAPTQKEAGIYPRKGKQTRQQQEHQKYMVPLQASAQEKNGL) are cytoplasmic. Residues 525 to 563 (PTQKEAGIYPRKGKQTRQQQEHQKYMVPLQASAQEKNGL) form a disordered region.

It belongs to the major facilitator (TC 2.A.1) superfamily. Organic cation transporter (TC 2.A.1.19) family. Glycosylated. Glycosylation at Asn-113 may occur at a secondary level. Glycosylation is necessary for proper targeting of the transporter to the plasma membrane. As to expression, strongly expressed in kidney. Expressed at lower level in liver, skeletal muscle, brain and placenta. In kidney, found at the basolateral membrane of the proximal tubule. In testis, primarily localized to the basal membrane of Sertoli cells and weakly expressed in Leydig cells and vascular endothelial cells.

It is found in the basolateral cell membrane. It localises to the basal cell membrane. It catalyses the reaction (6R)-L-erythro-5,6,7,8-tetrahydrobiopterin(out) + a dicarboxylate(in) = (6R)-L-erythro-5,6,7,8-tetrahydrobiopterin(in) + a dicarboxylate(out). The catalysed reaction is L-erythro-7,8-dihydrobiopterin(out) + a dicarboxylate(in) = L-erythro-7,8-dihydrobiopterin(in) + a dicarboxylate(out). It carries out the reaction L-sepiapterin(out) + a dicarboxylate(in) = L-sepiapterin(in) + a dicarboxylate(out). The enzyme catalyses prostaglandin F2alpha(out) + a dicarboxylate(in) = prostaglandin F2alpha(in) + a dicarboxylate(out). It catalyses the reaction prostaglandin E2(out) + a dicarboxylate(in) = prostaglandin E2(in) + a dicarboxylate(out). The catalysed reaction is 3',5'-cyclic AMP(out) + a dicarboxylate(in) = 3',5'-cyclic AMP(in) + a dicarboxylate(out). It carries out the reaction 3',5'-cyclic GMP(out) + a dicarboxylate(in) = 3',5'-cyclic GMP(in) + a dicarboxylate(out). The enzyme catalyses urate(out) + a dicarboxylate(in) = urate(in) + a dicarboxylate(out). It catalyses the reaction kynurenate(out) + glutarate(in) = kynurenate(in) + glutarate(out). The catalysed reaction is (indol-3-yl)acetate(out) + a dicarboxylate(in) = (indol-3-yl)acetate(in) + a dicarboxylate(out). It carries out the reaction indoxyl sulfate(out) + a dicarboxylate(in) = indoxyl sulfate(in) + a dicarboxylate(out). The enzyme catalyses N-benzoylglycine(out) + a dicarboxylate(in) = N-benzoylglycine(in) + a dicarboxylate(out). It catalyses the reaction 3-carboxy-4-methyl-5-propyl-2-furanpropanoate(out) + a dicarboxylate(in) = 3-carboxy-4-methyl-5-propyl-2-furanpropanoate(in) + a dicarboxylate(out). Functionally, secondary active transporter that functions as a Na(+)-independent organic anion (OA)/dicarboxylate antiporter where the uptake of one molecule of OA into the cell is coupled with an efflux of one molecule of intracellular dicarboxylate such as 2-oxoglutarate or glutarate. Mediates the uptake of OA across the basolateral side of proximal tubule epithelial cells, thereby contributing to the renal elimination of endogenous OA from the systemic circulation into the urine. Functions as a biopterin transporters involved in the uptake and the secretion of coenzymes tetrahydrobiopterin (BH4), dihydrobiopterin (BH2) and sepiapterin to urine, thereby determining baseline levels of blood biopterins. Transports prostaglandin E2 (PGE2) and prostaglandin F2-alpha (PGF2-alpha) and may contribute to their renal excretion. Also mediates the uptake of cyclic nucleotides such as cAMP and cGMP. Involved in the transport of neuroactive tryptophan metabolites kynurenate (KYNA) and xanthurenate (XA) and may contribute to their secretion from the brain. May transport glutamate. Also involved in the disposition of uremic toxins and potentially toxic xenobiotics by the renal organic anion secretory pathway, helping reduce their undesired toxicological effects on the body. Uremic toxins include the indoxyl sulfate (IS), hippurate/N-benzoylglycine (HA), indole acetate (IA), 3-carboxy-4- methyl-5-propyl-2-furanpropionate (CMPF) and urate. Xenobiotics include the mycotoxin ochratoxin (OTA). May also contribute to the transport of organic compounds in testes across the blood-testis-barrier. This chain is Solute carrier family 22 member 6, found in Homo sapiens (Human).